Consider the following 130-residue polypeptide: Single-stranded DNA-binding protein 1 (130 aa).

Residues 1–104 form the SSB domain; that stretch reads MINNVVLIGR…VVAESFQILE (104 aa). A disordered region spans residues 108–130; that stretch reads NTANTSSLADSMPDYGPEPDLPF.

Homotetramer.

The polypeptide is Single-stranded DNA-binding protein 1 (ssb1) (Streptococcus pyogenes serotype M18 (strain MGAS8232)).